Here is a 644-residue protein sequence, read N- to C-terminus: Exoribonuclease 2 (644 aa).

Positions 189–516 constitute an RNB domain; sequence RKDLTALDFV…NHRLLKAVIK (328 aa). Residues 561–643 form the S1 motif domain; that stretch reads DTRFAAEIVD…ETRSIIARPV (83 aa).

Belongs to the RNR ribonuclease family. RNase II subfamily.

The protein localises to the cytoplasm. It catalyses the reaction Exonucleolytic cleavage in the 3'- to 5'-direction to yield nucleoside 5'-phosphates.. Functionally, involved in mRNA degradation. Hydrolyzes single-stranded polyribonucleotides processively in the 3' to 5' direction. This chain is Exoribonuclease 2, found in Escherichia coli O157:H7.